The following is a 400-amino-acid chain: CCA-adding enzyme (400 aa).

ATP contacts are provided by G32 and R35. CTP is bound by residues G32 and R35. The Mg(2+) site is built by D45 and D47. ATP is bound by residues R116, D159, R162, R165, and R168. The CTP site is built by R116, D159, R162, R165, and R168.

This sequence belongs to the tRNA nucleotidyltransferase/poly(A) polymerase family. Bacterial CCA-adding enzyme type 3 subfamily. In terms of assembly, homodimer. The cofactor is Mg(2+).

The enzyme catalyses a tRNA precursor + 2 CTP + ATP = a tRNA with a 3' CCA end + 3 diphosphate. It catalyses the reaction a tRNA with a 3' CCA end + 2 CTP + ATP = a tRNA with a 3' CCACCA end + 3 diphosphate. Functionally, catalyzes the addition and repair of the essential 3'-terminal CCA sequence in tRNAs without using a nucleic acid template. Adds these three nucleotides in the order of C, C, and A to the tRNA nucleotide-73, using CTP and ATP as substrates and producing inorganic pyrophosphate. tRNA 3'-terminal CCA addition is required both for tRNA processing and repair. Also involved in tRNA surveillance by mediating tandem CCA addition to generate a CCACCA at the 3' terminus of unstable tRNAs. While stable tRNAs receive only 3'-terminal CCA, unstable tRNAs are marked with CCACCA and rapidly degraded. The protein is CCA-adding enzyme of Limosilactobacillus fermentum (strain NBRC 3956 / LMG 18251) (Lactobacillus fermentum).